Reading from the N-terminus, the 309-residue chain is UDP-URONIC ACID TRANSPORTER 1 (309 aa).

The next 10 membrane-spanning stretches (helical) occupy residues 9 to 29, 43 to 63, 78 to 98, 104 to 124, 131 to 151, 152 to 172, 193 to 213, 231 to 251, 256 to 278, and 283 to 302; these read TLFISTLIISWYSSNIGVLLL, IFLTMCHMSACAILSYISIVF, FLKVATLSIVFCASVVGGNIS, VSFNQAVGATTPFFTALFAYL, AWVTYGALVPVVAGVVIASGG, EPGFHWFGFIMCISATAARAF, LMLYMSPIAVIALLPVTLFME, WILLLVNSVMAYSANLLNFLV, SALTLQVLGNAKGAVAVVISILI, and VTVMGIGGYSITVLGVVAYG.

Belongs to the TPT transporter family. TPT (TC 2.A.7.9) subfamily. Ubiquitous.

It localises to the golgi apparatus membrane. Functionally, UDP-glucuronic acid transporter that modulates the polysaccharide composition of seed mucilage. Transports UDP-glucuronic acid (UDP-GlcA) and UDP-galacturonic acid (UDP-GalA) in vitro. This Arabidopsis thaliana (Mouse-ear cress) protein is UDP-URONIC ACID TRANSPORTER 1.